The sequence spans 33 residues: Dermaseptin-H9 (33 aa).

Position 33 is a leucine amide (leucine 33).

This sequence belongs to the frog skin active peptide (FSAP) family. Dermaseptin subfamily. In terms of tissue distribution, expressed by the skin glands.

It localises to the secreted. Has antimicrobial activity. The polypeptide is Dermaseptin-H9 (Pithecopus hypochondrialis (Orange-legged leaf frog)).